Consider the following 330-residue polypeptide: ADP-L-glycero-D-manno-heptose-6-epimerase (330 aa).

Residues 11–12 (FI), 32–33 (DN), K39, K54, 75–79 (EGACS), and N92 each bind NADP(+). Catalysis depends on Y139, which acts as the Proton acceptor. An NADP(+)-binding site is contributed by K143. N168 is a substrate binding site. 2 residues coordinate NADP(+): V169 and K177. The active-site Proton acceptor is the K177. Residues R179, H186, 200–203 (FGEY), R213, and Y292 contribute to the substrate site.

Belongs to the NAD(P)-dependent epimerase/dehydratase family. HldD subfamily. In terms of assembly, homopentamer. NADP(+) serves as cofactor.

It catalyses the reaction ADP-D-glycero-beta-D-manno-heptose = ADP-L-glycero-beta-D-manno-heptose. The protein operates within nucleotide-sugar biosynthesis; ADP-L-glycero-beta-D-manno-heptose biosynthesis; ADP-L-glycero-beta-D-manno-heptose from D-glycero-beta-D-manno-heptose 7-phosphate: step 4/4. In terms of biological role, catalyzes the interconversion between ADP-D-glycero-beta-D-manno-heptose and ADP-L-glycero-beta-D-manno-heptose via an epimerization at carbon 6 of the heptose. This is ADP-L-glycero-D-manno-heptose-6-epimerase from Paraburkholderia phytofirmans (strain DSM 17436 / LMG 22146 / PsJN) (Burkholderia phytofirmans).